A 620-amino-acid chain; its full sequence is Chaperone protein HscA homolog (620 aa).

This sequence belongs to the heat shock protein 70 family.

In terms of biological role, chaperone involved in the maturation of iron-sulfur cluster-containing proteins. Has a low intrinsic ATPase activity which is markedly stimulated by HscB. This chain is Chaperone protein HscA homolog, found in Shewanella loihica (strain ATCC BAA-1088 / PV-4).